Consider the following 173-residue polypeptide: Ribosome maturation factor RimM (173 aa).

The PRC barrel domain maps to 92–165 (EGEFYHADLI…RVVIEAPAEI (74 aa)).

The protein belongs to the RimM family. As to quaternary structure, binds ribosomal protein uS19.

The protein resides in the cytoplasm. In terms of biological role, an accessory protein needed during the final step in the assembly of 30S ribosomal subunit, possibly for assembly of the head region. Essential for efficient processing of 16S rRNA. May be needed both before and after RbfA during the maturation of 16S rRNA. It has affinity for free ribosomal 30S subunits but not for 70S ribosomes. This chain is Ribosome maturation factor RimM, found in Nitrobacter winogradskyi (strain ATCC 25391 / DSM 10237 / CIP 104748 / NCIMB 11846 / Nb-255).